We begin with the raw amino-acid sequence, 401 residues long: Imidazolonepropionase (401 aa).

Fe(3+) contacts are provided by His70 and His72. Residues His70 and His72 each contribute to the Zn(2+) site. Positions 79, 142, and 175 each coordinate 4-imidazolone-5-propanoate. Tyr142 serves as a coordination point for N-formimidoyl-L-glutamate. Fe(3+) is bound at residue His240. His240 contacts Zn(2+). Gln243 provides a ligand contact to 4-imidazolone-5-propanoate. Asp315 is a binding site for Fe(3+). Asp315 contacts Zn(2+). Residues Asn317 and Gly319 each coordinate N-formimidoyl-L-glutamate. Residue Thr320 participates in 4-imidazolone-5-propanoate binding.

Belongs to the metallo-dependent hydrolases superfamily. HutI family. The cofactor is Zn(2+). Fe(3+) is required as a cofactor.

It is found in the cytoplasm. It carries out the reaction 4-imidazolone-5-propanoate + H2O = N-formimidoyl-L-glutamate. The protein operates within amino-acid degradation; L-histidine degradation into L-glutamate; N-formimidoyl-L-glutamate from L-histidine: step 3/3. Its function is as follows. Catalyzes the hydrolytic cleavage of the carbon-nitrogen bond in imidazolone-5-propanoate to yield N-formimidoyl-L-glutamate. It is the third step in the universal histidine degradation pathway. The protein is Imidazolonepropionase of Caulobacter vibrioides (strain ATCC 19089 / CIP 103742 / CB 15) (Caulobacter crescentus).